Here is a 611-residue protein sequence, read N- to C-terminus: Ankyrin repeat protein SKIP35 (611 aa).

ANK repeat units follow at residues 292 to 322 (LFSN…EGGA), 323 to 353 (DNVN…RNSL), 356 to 384 (DVDL…NAIA), 385 to 414 (FLGP…DMEL), 416 to 442 (LALT…PPVL), and 445 to 478 (LSIE…DSTA).

Interacts with SKP1A/ASK1.

The protein is Ankyrin repeat protein SKIP35 (SKIP35) of Arabidopsis thaliana (Mouse-ear cress).